Reading from the N-terminus, the 451-residue chain is Glucose-6-phosphate isomerase (451 aa).

Thr38 bears the Phosphothreonine mark. The active-site Proton donor is the Glu290. Catalysis depends on residues His311 and Lys425.

This sequence belongs to the GPI family.

It is found in the cytoplasm. The enzyme catalyses alpha-D-glucose 6-phosphate = beta-D-fructose 6-phosphate. The protein operates within carbohydrate biosynthesis; gluconeogenesis. It participates in carbohydrate degradation; glycolysis; D-glyceraldehyde 3-phosphate and glycerone phosphate from D-glucose: step 2/4. Catalyzes the reversible isomerization of glucose-6-phosphate to fructose-6-phosphate. The sequence is that of Glucose-6-phosphate isomerase from Shouchella clausii (strain KSM-K16) (Alkalihalobacillus clausii).